A 99-amino-acid chain; its full sequence is Small ribosomal subunit protein uS17 (99 aa).

It belongs to the universal ribosomal protein uS17 family. In terms of assembly, part of the 30S ribosomal subunit.

In terms of biological role, one of the primary rRNA binding proteins, it binds specifically to the 5'-end of 16S ribosomal RNA. The polypeptide is Small ribosomal subunit protein uS17 (Thermosipho melanesiensis (strain DSM 12029 / CIP 104789 / BI429)).